A 210-amino-acid chain; its full sequence is Prolactin-2 (210 aa).

An N-terminal signal peptide occupies residues 1-23 (MARRSQGTKLHLAVLCLVVSCHA). 2 cysteine pairs are disulfide-bonded: C69-C183 and C200-C210.

It belongs to the somatotropin/prolactin family.

It localises to the secreted. The sequence is that of Prolactin-2 (prl2) from Oncorhynchus tshawytscha (Chinook salmon).